A 186-amino-acid polypeptide reads, in one-letter code: MRDAIDKYATYSVSRLNNVTTYLPGKVDGSGKDQIWISPNNFQVNREWGNGAHFKDKAYRFNFDVKVEYDVEVKAAWWTALFRGSIPGYWKGKFKVTYSFNGEVPSWNYGDKQVRPPQYSFKEQEKQLLFVPRHVQKIEAEGKHLEIINPFLKDQHLDFFEHYHPDLTQPLDMVSYLMYAIADKVK.

This sequence belongs to the MG032/MG096/MG288 family.

This is an uncharacterized protein from Mycoplasma pneumoniae (strain ATCC 29342 / M129 / Subtype 1) (Mycoplasmoides pneumoniae).